The primary structure comprises 262 residues: Zinc import ATP-binding protein ZnuC (262 aa).

One can recognise an ABC transporter domain in the interval 5-220 (IELQDICVDF…PSYLAMFGHR (216 aa)). An ATP-binding site is contributed by 37-44 (GPNGAGKS).

It belongs to the ABC transporter superfamily. Zinc importer (TC 3.A.1.15.5) family. The complex is composed of two ATP-binding proteins (ZnuC), two transmembrane proteins (ZnuB) and a solute-binding protein (ZnuA).

It is found in the cell inner membrane. The catalysed reaction is Zn(2+)(out) + ATP(in) + H2O(in) = Zn(2+)(in) + ADP(in) + phosphate(in) + H(+)(in). Its function is as follows. Part of the ABC transporter complex ZnuABC involved in zinc import. Responsible for energy coupling to the transport system. The chain is Zinc import ATP-binding protein ZnuC from Vibrio cholerae serotype O1 (strain ATCC 39315 / El Tor Inaba N16961).